An 817-amino-acid chain; its full sequence is Leucine--tRNA ligase (817 aa).

Positions 42–52 (PYPSGRLHMGH) match the 'HIGH' region motif. The short motif at 576–580 (KMSKS) is the 'KMSKS' region element. Lys579 is an ATP binding site.

The protein belongs to the class-I aminoacyl-tRNA synthetase family.

The protein resides in the cytoplasm. The enzyme catalyses tRNA(Leu) + L-leucine + ATP = L-leucyl-tRNA(Leu) + AMP + diphosphate. This is Leucine--tRNA ligase from Halorhodospira halophila (strain DSM 244 / SL1) (Ectothiorhodospira halophila (strain DSM 244 / SL1)).